Here is a 133-residue protein sequence, read N- to C-terminus: Core atranone cluster (CAC) protein 11 (133 aa).

It participates in mycotoxin biosynthesis. In terms of biological role, part of the core atranone cluster (CAC) which products are predicted to catalyze most or all steps of mycotoxin atranone synthesis, starting from geranylgeranyl pyrophosphate (GGPP). The initial cyclization of GGPP to dolabellane is probably performed by the terpene cyclase ATR13. The Baeyer-Villiger oxidation near the end of the atranone synthesis, which converts atranones D and E to atranones F and G is predicted to be catalyzed by the monooxygenase ATR8. Of the CAC's other predicted gene products, the reducing PKS ATR6 might synthesize a polyketide chain. This polyketide is probably transferred onto the atranone backbone by the polyketide transferase ATR5. Other predicted CAC products include 4 oxygenases (ATR2, ATR3, ATR4, and ATR14), 3 short-chain reductases (ATR7, ATR9, and ATR10), and a methyltransferase (ATR12). These may all be involved in the various steps of atranone biosynthesis, although their specific roles must await experimental determination. The protein is Core atranone cluster (CAC) protein 11 of Stachybotrys chlorohalonatus (strain IBT 40285).